A 548-amino-acid polypeptide reads, in one-letter code: T-complex protein 1 subunit theta (548 aa).

Ala2 carries the post-translational modification N-acetylalanine. The residue at position 23 (Ser23) is a Phosphoserine. Tyr30 is modified (phosphotyrosine). ADP contacts are provided by Tyr47 and Gly48. Position 99 (Asp99) interacts with Mg(2+). Residues Gly100, Thr101, Asn102, and Phe103 each coordinate ADP. Gly100, Thr101, and Asn102 together coordinate ATP. Ser162 is subject to Phosphoserine. ADP is bound by residues Met169, Ser170, and Lys171. ATP contacts are provided by Ser170 and Lys171. Ser213 bears the Phosphoserine mark. Glycyl lysine isopeptide (Lys-Gly) (interchain with G-Cter in SUMO2) cross-links involve residues Lys224, Lys254, and Lys260. Ser269 and Ser317 each carry phosphoserine. An N6-acetyllysine mark is found at Lys318 and Lys400. Residue Gly412 participates in ADP binding. Position 412 (Gly412) interacts with ATP. A Glycyl lysine isopeptide (Lys-Gly) (interchain with G-Cter in SUMO1) cross-link involves residue Lys459. Lys466 bears the N6-acetyllysine mark. An ADP-binding site is contributed by Asp499. Positions 499 and 504 each coordinate ATP. The residue at position 505 (Tyr505) is a Phosphotyrosine. The segment at 529–548 is disordered; the sequence is PAGGPKPPSGKKDWDDDQND. Lys534 participates in a covalent cross-link: Glycyl lysine isopeptide (Lys-Gly) (interchain with G-Cter in SUMO2). The residue at position 537 (Ser537) is a Phosphoserine. Residue Lys539 forms a Glycyl lysine isopeptide (Lys-Gly) (interchain with G-Cter in SUMO2) linkage.

It belongs to the TCP-1 chaperonin family. As to quaternary structure, component of the chaperonin-containing T-complex (TRiC), a hexadecamer composed of two identical back-to-back stacked rings enclosing a protein folding chamber. Each ring is made up of eight different subunits: TCP1/CCT1, CCT2, CCT3, CCT4, CCT5, CCT6A/CCT6, CCT7, CCT8. Interacts with PACRG. Interacts with DNAAF4. Interacts with synaptic plasticity regulator PANTS.

The protein resides in the cytoplasm. The protein localises to the cytoskeleton. It is found in the microtubule organizing center. It localises to the centrosome. Its subcellular location is the cilium basal body. The enzyme catalyses ATP + H2O = ADP + phosphate + H(+). Component of the chaperonin-containing T-complex (TRiC), a molecular chaperone complex that assists the folding of actin, tubulin and other proteins upon ATP hydrolysis. The TRiC complex mediates the folding of WRAP53/TCAB1, thereby regulating telomere maintenance. As part of the TRiC complex may play a role in the assembly of BBSome, a complex involved in ciliogenesis regulating transports vesicles to the cilia. In Homo sapiens (Human), this protein is T-complex protein 1 subunit theta (CCT8).